Reading from the N-terminus, the 663-residue chain is GPI mannosyltransferase 3 (663 aa).

The span at 1 to 11 (MPMSARSRRSN) shows a compositional bias: basic residues. The interval 1–44 (MPMSARSRRSNPRLPPSPSSSSSSDAVRASPHSSPPSRLRPPSA) is disordered. Low complexity predominate over residues 19-42 (SSSSSSDAVRASPHSSPPSRLRPP). Helical transmembrane passes span 47–67 (DVSS…ALTV), 110–130 (PLIF…LGLT), 137–157 (LLIA…DFYT), 226–246 (VLAV…FPPL), 269–289 (YASQ…LVGL), 304–324 (GSIL…LSVI), 335–355 (LLPA…IPAL), and 367–387 (LTLI…TLFH). The tract at residues 492–512 (HIPRRPSYATPPSSQRQPTQL) is disordered. A compositionally biased stretch (polar residues) spans 501 to 511 (TPPSSQRQPTQ).

The protein belongs to the glycosyltransferase 22 family. PIGB subfamily.

It localises to the endoplasmic reticulum membrane. Its pathway is glycolipid biosynthesis; glycosylphosphatidylinositol-anchor biosynthesis. In terms of biological role, mannosyltransferase involved in glycosylphosphatidylinositol-anchor biosynthesis. Transfers the third mannose to Man2-GlcN-acyl-PI during GPI precursor assembly. This chain is GPI mannosyltransferase 3 (gpi10), found in Emericella nidulans (strain FGSC A4 / ATCC 38163 / CBS 112.46 / NRRL 194 / M139) (Aspergillus nidulans).